Reading from the N-terminus, the 490-residue chain is Bifunctional protein HldE (490 aa).

A ribokinase region spans residues 1 to 330 (MERKNVESLF…GSMGFQHSDS (330 aa)). 205–208 (NRKE) contributes to the ATP binding site. The active site involves Asp275. Residues 356–490 (FTNGCFDLLH…DKILRAYGEE (135 aa)) form a cytidylyltransferase region.

This sequence in the N-terminal section; belongs to the carbohydrate kinase PfkB family. It in the C-terminal section; belongs to the cytidylyltransferase family. Homodimer.

The catalysed reaction is D-glycero-beta-D-manno-heptose 7-phosphate + ATP = D-glycero-beta-D-manno-heptose 1,7-bisphosphate + ADP + H(+). It catalyses the reaction D-glycero-beta-D-manno-heptose 1-phosphate + ATP + H(+) = ADP-D-glycero-beta-D-manno-heptose + diphosphate. It functions in the pathway nucleotide-sugar biosynthesis; ADP-L-glycero-beta-D-manno-heptose biosynthesis; ADP-L-glycero-beta-D-manno-heptose from D-glycero-beta-D-manno-heptose 7-phosphate: step 1/4. Its pathway is nucleotide-sugar biosynthesis; ADP-L-glycero-beta-D-manno-heptose biosynthesis; ADP-L-glycero-beta-D-manno-heptose from D-glycero-beta-D-manno-heptose 7-phosphate: step 3/4. Its function is as follows. Catalyzes the phosphorylation of D-glycero-D-manno-heptose 7-phosphate at the C-1 position to selectively form D-glycero-beta-D-manno-heptose-1,7-bisphosphate. Catalyzes the ADP transfer from ATP to D-glycero-beta-D-manno-heptose 1-phosphate, yielding ADP-D-glycero-beta-D-manno-heptose. The protein is Bifunctional protein HldE of Geobacter metallireducens (strain ATCC 53774 / DSM 7210 / GS-15).